We begin with the raw amino-acid sequence, 50 residues long: Cytochrome c-555 (50 aa).

Residues Cys7, Cys10, His11, and Met25 each coordinate heme.

Post-translationally, binds 1 heme group per subunit.

The protein localises to the cell membrane. The protein is Cytochrome c-555 of Schinkia azotoformans (Bacillus azotoformans).